Here is a 242-residue protein sequence, read N- to C-terminus: MIKMTGVQKFFDDFQALTDINLEVPAGQVVVVLGPSGSGKSTLCRTINRLETIEEGTIEIDGKLLPEEGKDLAKIRADVGMVFQSFNLFPHLTIKDNVTLGPMKVRKMKKSEANEVAMKLLERVGIANQAEKYPAQLSGGQQQRVAIARALAMNPKIMLFDEPTSALDPEMVNEVLDVMASLAKEGMTMVCVTHEMGFARRAADRVLFMSDGAIVEDSDPETFFTNPQTDRAKDFLGKILAH.

Residues 2-236 (IKMTGVQKFF…PQTDRAKDFL (235 aa)) form the ABC transporter domain. An ATP-binding site is contributed by 34–41 (GPSGSGKS).

The protein belongs to the ABC transporter superfamily. The complex is composed of two ATP-binding proteins (GluA), two transmembrane proteins (GluC and GluD) and a solute-binding protein (GluB).

It localises to the cell membrane. The catalysed reaction is a polar amino acid(out) + ATP + H2O = a polar amino acid(in) + ADP + phosphate + H(+). It catalyses the reaction L-glutamate(out) + ATP + H2O = L-glutamate(in) + ADP + phosphate + H(+). Part of the ABC transporter complex GluABCD involved in glutamate uptake. Probably responsible for energy coupling to the transport system. The sequence is that of Glutamate transport ATP-binding protein GluA from Corynebacterium efficiens (strain DSM 44549 / YS-314 / AJ 12310 / JCM 11189 / NBRC 100395).